We begin with the raw amino-acid sequence, 154 residues long: Methylglyoxal synthase (154 aa).

The 149-residue stretch at glycine 6–leucine 154 folds into the MGS-like domain. Residues histidine 19, lysine 23, threonine 45–threonine 48, and serine 65–glycine 66 each bind substrate. The active-site Proton donor/acceptor is aspartate 71. Histidine 98 provides a ligand contact to substrate.

It belongs to the methylglyoxal synthase family.

It carries out the reaction dihydroxyacetone phosphate = methylglyoxal + phosphate. In terms of biological role, catalyzes the formation of methylglyoxal from dihydroxyacetone phosphate. The chain is Methylglyoxal synthase from Saccharophagus degradans (strain 2-40 / ATCC 43961 / DSM 17024).